The chain runs to 56 residues: Large ribosomal subunit protein bL32 (56 aa).

Over residues 1–16 (MAVQKSKKSRSMRGMR) the composition is skewed to basic residues. Positions 1–21 (MAVQKSKKSRSMRGMRRSHDA) are disordered.

The protein belongs to the bacterial ribosomal protein bL32 family.

This is Large ribosomal subunit protein bL32 from Vibrio atlanticus (strain LGP32) (Vibrio splendidus (strain Mel32)).